A 354-amino-acid polypeptide reads, in one-letter code: MSKVKSITRESWILSTFPEWGSWLNEEIEQEQVAPGTFAMWWLGCTGIWLKSEGGTNVCVDFWCGTGKQSHGNPLMKQGHQMQRMAGVKKLQPNLRTTPFVLDPFAIRQIDAVLATHDHNDHIDVNVAAAVMQNCADDVPFIGPKTCVDLWIGWGVPKERCIVVKPGDVVKVKDIEIHALDAFDRTALITLPADQKAAGVLPDGMDDRAVNYLFKTPGGSLYHSGDSHYSNYYAKHGNEHQIDVALGSYGENPRGITDKMTSADMLRMGEALNAKVVIPFHHDIWSNFQADPQEIRVLWEIKKDRLKYGFKPFIWQVGGKFTWPLDKDNFEYHYPRGFDDCFTIEPDLPFKSFL.

The protein belongs to the UlaG family. Requires a divalent metal cation as cofactor.

The protein resides in the cytoplasm. The enzyme catalyses L-ascorbate 6-phosphate + H2O = 3-dehydro-L-gulonate 6-phosphate. Its pathway is cofactor degradation; L-ascorbate degradation; D-xylulose 5-phosphate from L-ascorbate: step 1/4. Probably catalyzes the hydrolysis of L-ascorbate-6-P into 3-keto-L-gulonate-6-P. Is essential for L-ascorbate utilization under anaerobic conditions. The protein is Probable L-ascorbate-6-phosphate lactonase UlaG of Shigella flexneri.